The chain runs to 375 residues: Filamin-binding LIM protein 1 (375 aa).

The interval 1 to 70 (MASKPEKRVA…SPWTPPGRAA (70 aa)) is filamin-binding. Disordered regions lie at residues 43–119 (WEAP…PSEE) and 137–176 (HLSP…AERV). 2 stretches are compositionally biased toward pro residues: residues 104 to 114 (FPPPPPPPPVL) and 140 to 149 (PPLPPPPPQA). Residues 150-159 (PAERPSVQPS) show a composition bias toward low complexity. 3 LIM zinc-binding domains span residues 183 to 244 (DICA…TLER), 245 to 302 (CGKC…RKFA), and 303 to 372 (PVCS…RSAA). The interval 278 to 375 (IGDESFALGS…HVKRSAAGCC (98 aa)) is FERMT2-binding.

Interacts with FERMT2, FLNA, FLNB and FLNC. Interacts with NKX2-5.

It localises to the cell junction. The protein resides in the focal adhesion. The protein localises to the cytoplasm. It is found in the cytoskeleton. Its subcellular location is the stress fiber. In terms of biological role, serves as an anchoring site for cell-ECM adhesion proteins and filamin-containing actin filaments. Is implicated in cell shape modulation (spreading) and motility. May participate in the regulation of filamin-mediated cross-linking and stabilization of actin filaments. May also regulate the assembly of filamin-containing signaling complexes that control actin assembly. Promotes dissociation of FLNA from ITGB3 and ITGB7. Promotes activation of integrins and regulates integrin-mediated cell-cell adhesion. The chain is Filamin-binding LIM protein 1 (FBLIM1) from Pongo abelii (Sumatran orangutan).